The sequence spans 92 residues: Protein E7 (92 aa).

Residues M1–E43 are E7 terminal domain. An LXCXE motif; interaction with host RB1 and TMEM173/STING motif is present at residues L24–E28. Residues C55 to C91 fold into a zinc finger. Positions I73 to L81 match the Nuclear export signal motif.

The protein belongs to the papillomaviridae E7 protein family. As to quaternary structure, homodimer. Homooligomer. Interacts with host RB1; this interaction induces dissociation of RB1-E2F1 complex thereby disrupting RB1 activity. Interacts with host EP300; this interaction represses EP300 transcriptional activity. Interacts with protein E2; this interaction inhibits E7 oncogenic activity. Interacts with host TMEM173/STING; this interaction impairs the ability of TMEM173/STING to sense cytosolic DNA and promote the production of type I interferon (IFN-alpha and IFN-beta). In terms of processing, highly phosphorylated.

The protein resides in the host cytoplasm. The protein localises to the host nucleus. Plays a role in viral genome replication by driving entry of quiescent cells into the cell cycle. Stimulation of progression from G1 to S phase allows the virus to efficiently use the cellular DNA replicating machinery to achieve viral genome replication. E7 protein has both transforming and trans-activating activities. Induces the disassembly of the E2F1 transcription factor from RB1, with subsequent transcriptional activation of E2F1-regulated S-phase genes. Interferes with host histone deacetylation mediated by HDAC1 and HDAC2, leading to transcription activation. Also plays a role in the inhibition of both antiviral and antiproliferative functions of host interferon alpha. Interaction with host TMEM173/STING impairs the ability of TMEM173/STING to sense cytosolic DNA and promote the production of type I interferon (IFN-alpha and IFN-beta). The polypeptide is Protein E7 (Homo sapiens (Human)).